We begin with the raw amino-acid sequence, 238 residues long: Peroxisomal biogenesis factor 11 (238 aa).

Belongs to the peroxin-11 family.

The protein resides in the mitochondrion. It localises to the peroxisome membrane. Functionally, involved in peroxisomal proliferation. Promotes peroxisome division and biogenesis. The polypeptide is Peroxisomal biogenesis factor 11 (pex11) (Schizosaccharomyces pombe (strain 972 / ATCC 24843) (Fission yeast)).